Here is a 411-residue protein sequence, read N- to C-terminus: 2,3-bisphosphoglycerate-independent phosphoglycerate mutase 1 (411 aa).

It belongs to the BPG-independent phosphoglycerate mutase family. A-PGAM subfamily. Homotetramer. The cofactor is Mg(2+).

The enzyme catalyses (2R)-2-phosphoglycerate = (2R)-3-phosphoglycerate. It functions in the pathway carbohydrate degradation; glycolysis; pyruvate from D-glyceraldehyde 3-phosphate: step 3/5. With respect to regulation, inhibited to approximately 20% by EDTA. Its function is as follows. Catalyzes the interconversion of 2-phosphoglycerate and 3-phosphoglycerate. This Methanocaldococcus jannaschii (strain ATCC 43067 / DSM 2661 / JAL-1 / JCM 10045 / NBRC 100440) (Methanococcus jannaschii) protein is 2,3-bisphosphoglycerate-independent phosphoglycerate mutase 1 (apgM1).